The following is a 1497-amino-acid chain: DNA-directed RNA polymerase subunit beta (1497 aa).

This sequence belongs to the RNA polymerase beta chain family. The RNAP catalytic core consists of 2 alpha, 1 beta, 1 beta' and 1 omega subunit. When a sigma factor is associated with the core the holoenzyme is formed, which can initiate transcription.

The catalysed reaction is RNA(n) + a ribonucleoside 5'-triphosphate = RNA(n+1) + diphosphate. Its function is as follows. DNA-dependent RNA polymerase catalyzes the transcription of DNA into RNA using the four ribonucleoside triphosphates as substrates. The chain is DNA-directed RNA polymerase subunit beta from Trichlorobacter lovleyi (strain ATCC BAA-1151 / DSM 17278 / SZ) (Geobacter lovleyi).